Here is a 111-residue protein sequence, read N- to C-terminus: Latartoxin-2b (111 aa).

Residues 1-19 form the signal peptide; that stretch reads MKVLVIIALCFFILQTALS. The propeptide at 20 to 43 is removed in mature form; sequence EDKYESFESYVEDLKSGNMKGEAR. Residues 40-43 carry the Processing quadruplet motif motif; that stretch reads GEAR. 5 disulfide bridges follow: Cys45–Cys62, Cys52–Cys73, Cys61–Cys87, Cys75–Cys85, and Cys78–Cys99. A Valine amide modification is found at Val110.

It belongs to the neurotoxin 19 (CSTX) family. 11 (latartoxin) subfamily. Post-translationally, contains 5 disulfide bonds. In terms of processing, cleavage of the propeptide depends on the processing quadruplet motif (XXXR, with at least one of X being E). Expressed by the venom gland.

The protein resides in the secreted. In terms of biological role, insect toxin. This Lachesana tarabaevi (Spider) protein is Latartoxin-2b.